Reading from the N-terminus, the 372-residue chain is Chaperone protein DnaJ (372 aa).

Positions 5 to 69 constitute a J domain; the sequence is DYYEVLGLTK…QKKARYDQFG (65 aa). Residues 129–211 form a CR-type zinc finger; sequence GKETEIEIPK…CRGEGKVQKR (83 aa). Zn(2+) is bound by residues cysteine 142, cysteine 145, cysteine 159, cysteine 162, cysteine 185, cysteine 188, cysteine 199, and cysteine 202. 4 CXXCXGXG motif repeats span residues 142-149, 159-166, 185-192, and 199-206; these read CETCHGSG, CSTCNGAG, CTTCHGTG, and CSTCRGEG.

It belongs to the DnaJ family. Homodimer. The cofactor is Zn(2+).

The protein localises to the cytoplasm. Participates actively in the response to hyperosmotic and heat shock by preventing the aggregation of stress-denatured proteins and by disaggregating proteins, also in an autonomous, DnaK-independent fashion. Unfolded proteins bind initially to DnaJ; upon interaction with the DnaJ-bound protein, DnaK hydrolyzes its bound ATP, resulting in the formation of a stable complex. GrpE releases ADP from DnaK; ATP binding to DnaK triggers the release of the substrate protein, thus completing the reaction cycle. Several rounds of ATP-dependent interactions between DnaJ, DnaK and GrpE are required for fully efficient folding. Also involved, together with DnaK and GrpE, in the DNA replication of plasmids through activation of initiation proteins. The polypeptide is Chaperone protein DnaJ (Lysinibacillus sphaericus (strain C3-41)).